The primary structure comprises 41 residues: Ornatin-A3 (41 aa).

The short motif at 33–35 is the Cell attachment site element; that stretch reads RGD.

It belongs to the ornatin family.

Its subcellular location is the secreted. Functionally, potent inhibitor of fibrinogen interaction with platelet receptors expressed on glycoprotein IIb-IIIa complex. May prevent blood from clotting during either feeding and/or storage of ingested blood. This chain is Ornatin-A3, found in Placobdella ornata (Turtle leech).